Reading from the N-terminus, the 471-residue chain is Cleavage and polyadenylation specificity factor subunit 7 (471 aa).

The tract at residues V34–P68 is disordered. Residues E50–K62 show a composition bias toward pro residues. The RRM domain maps to A82–R162. Positions E176–S220 are disordered. Residues H190 to D199 are compositionally biased toward basic and acidic residues. T203 is modified (phosphothreonine). S205 carries the phosphoserine modification. Residue K354 forms a Glycyl lysine isopeptide (Lys-Gly) (interchain with G-Cter in SUMO2) linkage. The segment at S409 to H471 is disordered. 2 positions are modified to phosphoserine: S413 and S423. The segment at R418–R469 is arg/Ser-rich domain. 2 stretches are compositionally biased toward basic and acidic residues: residues E425–S434 and L441–H471.

This sequence belongs to the RRM CPSF6/7 family. Component of the cleavage factor Im (CFIm) complex which is a heterotetramer composed of two subunits of NUDT21/CPSF5 and two subunits of CPSF6 or CPSF7 or a heterodimer of CPSF6 and CPSF7. The cleavage factor Im (CFIm) complex associates with the CPSF and CSTF complexes to promote the assembly of the core mRNA 3'-processing machinery. Interacts with NUDT21/CPSF5. Interacts (via Arg/Ser-rich domain) with FIP1L1 (preferentially via unphosphorylated form and Arg/Glu/Asp-rich region); this interaction mediates, at least in part, the interaction between the CFIm and CPSF complexes and may be inhibited by CPSF7 hyper-phosphorylation. Phosphorylated. In terms of processing, asymmetrically dimethylated on arginine residues by PRMT1.

Its subcellular location is the nucleus. It localises to the cytoplasm. Its function is as follows. Component of the cleavage factor Im (CFIm) complex that functions as an activator of the pre-mRNA 3'-end cleavage and polyadenylation processing required for the maturation of pre-mRNA into functional mRNAs. CFIm contributes to the recruitment of multiprotein complexes on specific sequences on the pre-mRNA 3'-end, so called cleavage and polyadenylation signals (pA signals). Most pre-mRNAs contain multiple pA signals, resulting in alternative cleavage and polyadenylation (APA) producing mRNAs with variable 3'-end formation. The CFIm complex acts as a key regulator of cleavage and polyadenylation site choice during APA through its binding to 5'-UGUA-3' elements localized in the 3'-untranslated region (UTR) for a huge number of pre-mRNAs. CPSF7 activates directly the mRNA 3'-processing machinery. Binds to pA signals in RNA substrates. This chain is Cleavage and polyadenylation specificity factor subunit 7, found in Mus musculus (Mouse).